A 474-amino-acid chain; its full sequence is UDP-N-acetylmuramate--L-alanine ligase (474 aa).

123 to 129 (GTHGKTT) is an ATP binding site.

The protein belongs to the MurCDEF family.

Its subcellular location is the cytoplasm. It carries out the reaction UDP-N-acetyl-alpha-D-muramate + L-alanine + ATP = UDP-N-acetyl-alpha-D-muramoyl-L-alanine + ADP + phosphate + H(+). The protein operates within cell wall biogenesis; peptidoglycan biosynthesis. Its function is as follows. Cell wall formation. This is UDP-N-acetylmuramate--L-alanine ligase from Alcanivorax borkumensis (strain ATCC 700651 / DSM 11573 / NCIMB 13689 / SK2).